A 513-amino-acid polypeptide reads, in one-letter code: GMP synthase [glutamine-hydrolyzing] (513 aa).

Positions 3 to 200 constitute a Glutamine amidotransferase type-1 domain; sequence SVTVLDFGSQ…LIDIAGIKPD (198 aa). Catalysis depends on C80, which acts as the Nucleophile. Residues H174 and E176 contribute to the active site. Residues 201–388 form the GMPS ATP-PPase domain; that stretch reads WSPKSFIGHQ…LGIAEDILMR (188 aa). Position 228–234 (228–234) interacts with ATP; that stretch reads SGGVDST.

As to quaternary structure, homodimer.

It catalyses the reaction XMP + L-glutamine + ATP + H2O = GMP + L-glutamate + AMP + diphosphate + 2 H(+). The protein operates within purine metabolism; GMP biosynthesis; GMP from XMP (L-Gln route): step 1/1. Catalyzes the synthesis of GMP from XMP. The sequence is that of GMP synthase [glutamine-hydrolyzing] from Chlorobium phaeobacteroides (strain DSM 266 / SMG 266 / 2430).